Reading from the N-terminus, the 1615-residue chain is Low-density lipoprotein receptor-related protein 5 (1615 aa).

An N-terminal signal peptide occupies residues 1-31 (MEAAPPGPPWPLLLLLLLLLALCGCPAPAAA). A beta-propeller 1 region spans residues 32-288 (SPLLLFANRR…YSPMDIQVLS (257 aa)). The Extracellular portion of the chain corresponds to 32–1384 (SPLLLFANRR…PPSDDSPAHS (1353 aa)). LDL-receptor class B repeat units follow at residues 75 to 119 (GAVY…DWVG), 120 to 162 (KKLY…DPAH), 163 to 206 (GYMY…DLEE), 207 to 247 (QKLY…TLSG), and 248 to 290 (DTLY…LSQE). One copy of the YWTD 1 repeat lies at 78–81 (YWTD). N93 carries an N-linked (GlcNAc...) asparagine glycan. The stretch at 123–126 (YWTD) is one YWTD 2 repeat. N-linked (GlcNAc...) asparagine glycosylation occurs at N138. One copy of the YWTD 3 repeat lies at 166 to 169 (YWTD). A YWTD 4 repeat occupies 251 to 254 (YWTD). The EGF-like 1 domain maps to 295 to 337 (FHTRCEEDNGGCSHLCLLSPSEPFYTCACPTGVQLQDNGRTCK). Disulfide bonds link C299–C310, C306–C321, and C323–C336. The interval 341-602 (EEVLLLARRT…AVNVAKVVGT (262 aa)) is beta-propeller 2. LDL-receptor class B repeat units lie at residues 385-427 (GYVY…DWVA), 428-470 (RNLY…HPVM), 471-514 (GLMY…DLQE), 515-557 (GKLY…LGDF), and 558-600 (IYWT…AKVV). YWTD repeat units lie at residues 388 to 391 (YWTD) and 431 to 434 (YWTD). N-linked (GlcNAc...) asparagine glycosylation is present at N446. Residues 474–477 (YWTD) form a YWTD 7 repeat. The N-linked (GlcNAc...) asparagine glycan is linked to N499. One copy of the YWTD 8 repeat lies at 559 to 562 (YWTD). In terms of domain architecture, EGF-like 2 spans 601 to 641 (GTNPCADRNGGCSHLCFFTPHATRCGCPIGLELLSDMKTCI). Cystine bridges form between C605-C616, C612-C625, and C627-C640. Positions 644–903 (EAFLVFTSRA…VFHSSRQDGL (260 aa)) are beta-propeller 3. LDL-receptor class B repeat units lie at residues 687-729 (NHIY…DWMG), 730-772 (KNLY…DPTK), 773-815 (GYIY…DYAD), 816-855 (QRLYWTDLDTNMIESSNMLGQERVVIADDLPHPFGLTQYS), and 856-898 (DYIY…FHSS). The stretch at 690 to 693 (YWTD) is one YWTD 9 repeat. A glycan (N-linked (GlcNAc...) asparagine) is linked at N705. YWTD repeat units lie at residues 819 to 822 (YWTD) and 859 to 862 (YWTD). A glycan (N-linked (GlcNAc...) asparagine) is linked at N878. Residues 902-942 (GLNDCMHNNGQCGQLCLAIPGGHRCGCASHYTLDPSSRNCS) enclose the EGF-like 3 domain. Intrachain disulfides connect C906-C917, C913-C926, and C928-C941. Residues 945–1212 (TTFLLFSQKS…AVEEVSLEEF (268 aa)) are beta-propeller 4. LDL-receptor class B repeat units lie at residues 989–1035 (KFIY…DIYS), 1036–1078 (RTLF…NAER), 1079–1123 (GYLY…DNTL), 1124–1164 (GKLF…TILG), and 1165–1207 (KHLY…VEEV). Positions 1213–1254 (SAHPCARDNGGCSHICIAKGDGTPRCSCPVHLVLLQNLLTCG) constitute an EGF-like 4 domain. 12 cysteine pairs are disulfide-bonded: C1217–C1228, C1224–C1238, C1240–C1253, C1259–C1273, C1266–C1286, C1280–C1295, C1298–C1310, C1305–C1323, C1317–C1332, C1336–C1348, C1343–C1361, and C1355–C1370. LDL-receptor class A domains are found at residues 1258-1296 (TCSPDQFACATGEIDCIPGAWRCDGFPECDDQSDEEGCP), 1297-1333 (VCSAAQFPCARGQCVDLRLRCDGEADCQDRSDEADCD), and 1335-1371 (ICLPNQFRCASGQCVLIKQQCDSFPDCIDGSDELMCE). The helical transmembrane segment at 1385-1407 (SAIGPVIGIILSLFVMGGVYFVC) threads the bilayer. The Cytoplasmic portion of the chain corresponds to 1408-1615 (QRVVCQRYAG…PPPSPCTDSS (208 aa)). The disordered stretch occupies residues 1475-1501 (RNHVTGASSSSSSSTKATLYPPILNPP). A PPPSP motif A motif is present at residues 1500 to 1506 (PPPSPAT). The PPPSP motif B motif lies at 1538-1545 (PPTTPCST). The segment at 1568-1615 (SDSDPYPPPPTPHSQYLSAEDSCPPSPATERSYFHLFPPPPSPCTDSS) is disordered. The PPPSP motif C signature appears at 1574–1581 (PPPPTPHS). Residues 1591 to 1596 (PPSPAT) carry the PPPSP motif D motif. Residues 1604 to 1615 (FPPPPSPCTDSS) show a composition bias toward pro residues. The PPPSP motif E motif lies at 1605–1612 (PPPPSPCT).

It belongs to the LDLR family. Homodimer; disulfide-linked. Forms phosphorylated oligomer aggregates on Wnt-signaling. Component of a Wnt-signaling complex that contains a WNT protein, a FZD protein and LRP5 or LRP6. Interacts with FZD8; the interaction is formed on WNT-binding and signaling. Interacts (via the phosphorylated PPPSP motif domains) with AXIN1; the interaction prevents inhibition of beta-catenin phosphorylation and signaling and is enhanced in the presence of GSK3B and WNT1 or WNT3A. Interacts (via beta-propeller regions 3 and 4) with DKK1; the interaction, enhanced by MESD and/or KREMEN, inhibits beta-catenin signaling by preventing GSK3-mediated phosphorylation of the PPPSP motifs and subsequent, AXIN1 binding. Interacts with MESD; the interaction prevents the formation of LRP5 aggregates, targets LRP5 to the plasma membrane and, when complexed with KREMEN2, increases DKK1 binding. Interacts with CSNK1E. Interacts with SOST; the interaction antagonizes canonical Wnt signaling. Interacts with APCDD1. Interacts with CAPRIN2. Phosphorylation of cytoplasmic PPPSP motifs regulates the signal transduction of the Wnt signaling pathway through acting as a docking site for AXIN1. As to expression, widely expressed, with the highest level of expression in the liver and in aorta.

The protein resides in the membrane. Its subcellular location is the endoplasmic reticulum. Its function is as follows. Acts as a coreceptor with members of the frizzled family of seven-transmembrane spanning receptors to transduce signal by Wnt proteins. Activates the canonical Wnt signaling pathway that controls cell fate determination and self-renewal during embryonic development and adult tissue regeneration. In particular, may play an important role in the development of the posterior patterning of the epiblast during gastrulation. During bone development, regulates osteoblast proliferation and differentiation thus determining bone mass. Mechanistically, the formation of the signaling complex between Wnt ligand, frizzled receptor and LRP5 coreceptor promotes the recruitment of AXIN1 to LRP5, stabilizing beta-catenin/CTNNB1 and activating TCF/LEF-mediated transcriptional programs. Acts as a coreceptor for non-Wnt proteins, such as norrin/NDP. Binding of norrin/NDP to frizzled 4/FZD4-LRP5 receptor complex triggers beta-catenin/CTNNB1-dependent signaling known to be required for retinal vascular development. Plays a role in controlling postnatal vascular regression in retina via macrophage-induced endothelial cell apoptosis. The protein is Low-density lipoprotein receptor-related protein 5 of Homo sapiens (Human).